Here is a 249-residue protein sequence, read N- to C-terminus: tRNA pseudouridine synthase A (249 aa).

Aspartate 52 acts as the Nucleophile in catalysis. Substrate is bound at residue tyrosine 111.

This sequence belongs to the tRNA pseudouridine synthase TruA family. In terms of assembly, homodimer.

The catalysed reaction is uridine(38/39/40) in tRNA = pseudouridine(38/39/40) in tRNA. Functionally, formation of pseudouridine at positions 38, 39 and 40 in the anticodon stem and loop of transfer RNAs. This Maricaulis maris (strain MCS10) (Caulobacter maris) protein is tRNA pseudouridine synthase A.